A 513-amino-acid chain; its full sequence is Putative BTB/POZ domain-containing protein L55 (513 aa).

Residues 11-83 (SPIKIILQDI…FHGYKMEISD (73 aa)) enclose the BTB domain.

This sequence belongs to the mimivirus BTB/WD family.

The polypeptide is Putative BTB/POZ domain-containing protein L55 (Acanthamoeba polyphaga (Amoeba)).